We begin with the raw amino-acid sequence, 184 residues long: Protein Syd (184 aa).

It belongs to the Syd family.

The protein localises to the cell inner membrane. Interacts with the SecY protein in vivo. May bind preferentially to an uncomplexed state of SecY, thus functioning either as a chelating agent for excess SecY in the cell or as a regulatory factor that negatively controls the translocase function. This chain is Protein Syd, found in Psychromonas ingrahamii (strain DSM 17664 / CCUG 51855 / 37).